The primary structure comprises 126 residues: Glycine cleavage system H protein (126 aa).

One can recognise a Lipoyl-binding domain in the interval 22–104 (IATVGITAFA…YGRGWLFKVE (83 aa)). Lys63 carries the N6-lipoyllysine modification.

It belongs to the GcvH family. As to quaternary structure, the glycine cleavage system is composed of four proteins: P, T, L and H. (R)-lipoate is required as a cofactor.

Its function is as follows. The glycine cleavage system catalyzes the degradation of glycine. The H protein shuttles the methylamine group of glycine from the P protein to the T protein. This is Glycine cleavage system H protein from Thermobifida fusca (strain YX).